A 138-amino-acid polypeptide reads, in one-letter code: Basic phospholipase A2 myotoxin I (138 aa).

Residues 1–16 (MRTLWIMAVLLVGVEG) form the signal peptide. 7 cysteine pairs are disulfide-bonded: C42–C131, C44–C60, C59–C111, C65–C138, C66–C104, C73–C97, and C91–C102. Ca(2+) is bound by residues Y43, G45, and G47. H63 is an active-site residue. Residue D64 participates in Ca(2+) binding. D105 is an active-site residue.

The protein belongs to the phospholipase A2 family. Group II subfamily. D49 sub-subfamily. As to quaternary structure, monomer. Homodimer; non-covalently linked (alternative/compact dimer conformation). The cofactor is Ca(2+). Expressed by the venom gland.

The protein resides in the secreted. It catalyses the reaction a 1,2-diacyl-sn-glycero-3-phosphocholine + H2O = a 1-acyl-sn-glycero-3-phosphocholine + a fatty acid + H(+). High level of membrane cholesterol content reduces cytolytic activity, whereas low level of membrane cholesterol content increases cytolytic activity. Snake venom phospholipase A2 (PLA2) that displays local myotoxic activity. It also displays anticoagulant action in plasma and edema-inducing activities. In addition, it shows cytotoxic activity to a variety of cell types and bactericidal activity to a variety of Gram-negative and Gram-positive bacteria. PLA2 catalyzes the calcium-dependent hydrolysis of the 2-acyl groups in 3-sn-phosphoglycerides. The protein is Basic phospholipase A2 myotoxin I of Bothrops asper (Terciopelo).